Reading from the N-terminus, the 146-residue chain is Ribosome-binding factor A (146 aa).

Positions 125 to 146 (RDLDADDDKTKDDRAKDDKDSE) are disordered.

This sequence belongs to the RbfA family. Monomer. Binds 30S ribosomal subunits, but not 50S ribosomal subunits or 70S ribosomes.

Its subcellular location is the cytoplasm. One of several proteins that assist in the late maturation steps of the functional core of the 30S ribosomal subunit. Associates with free 30S ribosomal subunits (but not with 30S subunits that are part of 70S ribosomes or polysomes). Required for efficient processing of 16S rRNA. May interact with the 5'-terminal helix region of 16S rRNA. This chain is Ribosome-binding factor A, found in Mesorhizobium japonicum (strain LMG 29417 / CECT 9101 / MAFF 303099) (Mesorhizobium loti (strain MAFF 303099)).